We begin with the raw amino-acid sequence, 276 residues long: MLTTTVDGLWVLQAVTGVEQTCPELGLRPLLPRLDTAERALRHPVAAELMAVGALDQAGNADPMVREWLTVLLRRDLGLLVTIGVPGGEPTRAAICRFATWWVVLERHGNLVRLYPAGTASDEAGAGELVVGQVERLCGVAEAAPLRPVTVDADELLHAVRDAGTLRSYLLSQRLDVDQLQMVTMAADPTRSAHATLVALQAGVGPEKSARILVGDSTVAIVDTAAGRICVESVTSGQRRYQVLSPGSRSDIGGAVQRLIRRLPAGDEWYSYRRVV.

It belongs to the EspG family. In terms of assembly, interacts specifically with ESX-2-dependent PE/PPE proteins.

The protein resides in the cytoplasm. In terms of biological role, specific chaperone for cognate PE/PPE proteins. Plays an important role in preventing aggregation of PE/PPE dimers. This Mycobacterium tuberculosis (strain CDC 1551 / Oshkosh) protein is ESX-2 secretion-associated protein EspG2.